The sequence spans 512 residues: Ribose import ATP-binding protein RbsA 2 (512 aa).

2 ABC transporter domains span residues 22-258 (LEMR…VGRD) and 263-512 (FPKV…TGNA). Residue 54–61 (GENGAGKS) coordinates ATP.

This sequence belongs to the ABC transporter superfamily. Ribose importer (TC 3.A.1.2.1) family. The complex is composed of an ATP-binding protein (RbsA), two transmembrane proteins (RbsC) and a solute-binding protein (RbsB).

The protein localises to the cell inner membrane. It catalyses the reaction D-ribose(out) + ATP + H2O = D-ribose(in) + ADP + phosphate + H(+). Its function is as follows. Part of the ABC transporter complex RbsABC involved in ribose import. Responsible for energy coupling to the transport system. This is Ribose import ATP-binding protein RbsA 2 from Rhizobium johnstonii (strain DSM 114642 / LMG 32736 / 3841) (Rhizobium leguminosarum bv. viciae).